A 159-amino-acid polypeptide reads, in one-letter code: Transcription elongation factor GreA (159 aa).

It belongs to the GreA/GreB family.

Its function is as follows. Necessary for efficient RNA polymerase transcription elongation past template-encoded arresting sites. The arresting sites in DNA have the property of trapping a certain fraction of elongating RNA polymerases that pass through, resulting in locked ternary complexes. Cleavage of the nascent transcript by cleavage factors such as GreA or GreB allows the resumption of elongation from the new 3'terminus. GreA releases sequences of 2 to 3 nucleotides. The chain is Transcription elongation factor GreA from Buchnera aphidicola subsp. Acyrthosiphon pisum (strain APS) (Acyrthosiphon pisum symbiotic bacterium).